The following is a 388-amino-acid chain: Dual-specificity RNA methyltransferase RlmN (388 aa).

E109 acts as the Proton acceptor in catalysis. One can recognise a Radical SAM core domain in the interval E115–D354. The cysteines at positions 122 and 359 are disulfide-linked. Positions 129, 133, and 136 each coordinate [4Fe-4S] cluster. S-adenosyl-L-methionine-binding positions include G183–E184, S215, S237–H239, and N316. Residue C359 is the S-methylcysteine intermediate of the active site.

The protein belongs to the radical SAM superfamily. RlmN family. It depends on [4Fe-4S] cluster as a cofactor.

The protein resides in the cytoplasm. The enzyme catalyses adenosine(2503) in 23S rRNA + 2 reduced [2Fe-2S]-[ferredoxin] + 2 S-adenosyl-L-methionine = 2-methyladenosine(2503) in 23S rRNA + 5'-deoxyadenosine + L-methionine + 2 oxidized [2Fe-2S]-[ferredoxin] + S-adenosyl-L-homocysteine. It catalyses the reaction adenosine(37) in tRNA + 2 reduced [2Fe-2S]-[ferredoxin] + 2 S-adenosyl-L-methionine = 2-methyladenosine(37) in tRNA + 5'-deoxyadenosine + L-methionine + 2 oxidized [2Fe-2S]-[ferredoxin] + S-adenosyl-L-homocysteine. In terms of biological role, specifically methylates position 2 of adenine 2503 in 23S rRNA and position 2 of adenine 37 in tRNAs. m2A2503 modification seems to play a crucial role in the proofreading step occurring at the peptidyl transferase center and thus would serve to optimize ribosomal fidelity. This is Dual-specificity RNA methyltransferase RlmN from Klebsiella pneumoniae (strain 342).